The following is a 221-amino-acid chain: uncharacterized protein (221 aa).

The signal sequence occupies residues 1 to 26 (MVRLVPRAFAATVALLAAGFSPATAS).

This is an uncharacterized protein from Mycobacterium tuberculosis (strain CDC 1551 / Oshkosh).